A 202-amino-acid polypeptide reads, in one-letter code: GTP-binding protein rho1 (202 aa).

Residue 13 to 20 (GDGACGKT) coordinates GTP. Residues 35-43 (YVPTVFENY) carry the Effector region motif. Residues 60–64 (DTAGQ) and 118–121 (CKAD) each bind GTP. Position 199 is a cysteine methyl ester (cysteine 199). Residue cysteine 199 is the site of S-geranylgeranyl cysteine attachment. Residues 200–202 (ILL) constitute a propeptide, removed in mature form.

It belongs to the small GTPase superfamily. Rho family.

The protein resides in the cell membrane. Functionally, involved in the regulation of cell wall growth and actin cytoskeleton organization. Activates (1,3)-beta-D-glucan synthase. In Schizosaccharomyces pombe (strain 972 / ATCC 24843) (Fission yeast), this protein is GTP-binding protein rho1 (rho1).